The following is a 264-amino-acid chain: Thymidylate synthase (264 aa).

Arg-21 contacts dUMP. His-51 contacts (6R)-5,10-methylene-5,6,7,8-tetrahydrofolate. 126–127 provides a ligand contact to dUMP; sequence RR. Catalysis depends on Cys-146, which acts as the Nucleophile. DUMP-binding positions include 166 to 169, Asn-177, and 207 to 209; these read RSAD and HIY. Asp-169 contributes to the (6R)-5,10-methylene-5,6,7,8-tetrahydrofolate binding site. Ala-263 contributes to the (6R)-5,10-methylene-5,6,7,8-tetrahydrofolate binding site.

Belongs to the thymidylate synthase family. Bacterial-type ThyA subfamily. In terms of assembly, homodimer.

It is found in the cytoplasm. It catalyses the reaction dUMP + (6R)-5,10-methylene-5,6,7,8-tetrahydrofolate = 7,8-dihydrofolate + dTMP. It participates in pyrimidine metabolism; dTTP biosynthesis. In terms of biological role, catalyzes the reductive methylation of 2'-deoxyuridine-5'-monophosphate (dUMP) to 2'-deoxythymidine-5'-monophosphate (dTMP) while utilizing 5,10-methylenetetrahydrofolate (mTHF) as the methyl donor and reductant in the reaction, yielding dihydrofolate (DHF) as a by-product. This enzymatic reaction provides an intracellular de novo source of dTMP, an essential precursor for DNA biosynthesis. The polypeptide is Thymidylate synthase (Ruminiclostridium cellulolyticum (strain ATCC 35319 / DSM 5812 / JCM 6584 / H10) (Clostridium cellulolyticum)).